Consider the following 317-residue polypeptide: Fe-S cluster assembly protein dre2 (317 aa).

Residues 22-152 (PVQAKRTLLL…KPNFEPSAAV (131 aa)) are N-terminal SAM-like domain. The interval 153–209 (PLKFGLKKKNKPTPTAVPSIPTGFAAPMGIDSPVTNHDRDEDDELINEDTLLSEEDL) is linker. Positions 219, 230, 233, and 235 each coordinate [2Fe-2S] cluster. The fe-S binding site A stretch occupies residues 219–235 (CQPKTGRRRRACKDCTC). [4Fe-4S] cluster contacts are provided by Cys280, Cys283, Cys291, and Cys294. Short sequence motifs (cx2C motif) lie at residues 280 to 283 (CGSC) and 291 to 294 (CDGC). Residues 280 to 294 (CGSCALGDAFRCDGC) are fe-S binding site B.

The protein belongs to the anamorsin family. In terms of assembly, monomer. Interacts with tah18. Interacts with mia40. It depends on [2Fe-2S] cluster as a cofactor. [4Fe-4S] cluster is required as a cofactor.

It localises to the cytoplasm. It is found in the mitochondrion intermembrane space. Component of the cytosolic iron-sulfur (Fe-S) protein assembly (CIA) machinery required for the maturation of extramitochondrial Fe-S proteins. Part of an electron transfer chain functioning in an early step of cytosolic Fe-S biogenesis, facilitating the de novo assembly of a [4Fe-4S] cluster on the scaffold complex cfd1-nbp35. Electrons are transferred to dre2 from NADPH via the FAD- and FMN-containing protein tah18. Tah18-dre2 are also required for the assembly of the diferric tyrosyl radical cofactor of ribonucleotide reductase (RNR), probably by providing electrons for reduction during radical cofactor maturation in the catalytic small subunit rnr2. This is Fe-S cluster assembly protein dre2 from Penicillium rubens (strain ATCC 28089 / DSM 1075 / NRRL 1951 / Wisconsin 54-1255) (Penicillium chrysogenum).